Reading from the N-terminus, the 124-residue chain is Small ribosomal subunit protein uS10 (124 aa).

It belongs to the universal ribosomal protein uS10 family.

In Dictyostelium discoideum (Social amoeba), this protein is Small ribosomal subunit protein uS10 (rps20).